The sequence spans 1342 residues: DNA-directed RNA polymerase subunit beta (1342 aa).

The protein belongs to the RNA polymerase beta chain family. The RNAP catalytic core consists of 2 alpha, 1 beta, 1 beta' and 1 omega subunit. When a sigma factor is associated with the core the holoenzyme is formed, which can initiate transcription.

It catalyses the reaction RNA(n) + a ribonucleoside 5'-triphosphate = RNA(n+1) + diphosphate. Its function is as follows. DNA-dependent RNA polymerase catalyzes the transcription of DNA into RNA using the four ribonucleoside triphosphates as substrates. In Edwardsiella ictaluri (strain 93-146), this protein is DNA-directed RNA polymerase subunit beta.